The sequence spans 386 residues: Histidinol-phosphate aminotransferase (386 aa).

An N6-(pyridoxal phosphate)lysine modification is found at Lys240.

Belongs to the class-II pyridoxal-phosphate-dependent aminotransferase family. Histidinol-phosphate aminotransferase subfamily. In terms of assembly, homodimer. Requires pyridoxal 5'-phosphate as cofactor.

It catalyses the reaction L-histidinol phosphate + 2-oxoglutarate = 3-(imidazol-4-yl)-2-oxopropyl phosphate + L-glutamate. It functions in the pathway amino-acid biosynthesis; L-histidine biosynthesis; L-histidine from 5-phospho-alpha-D-ribose 1-diphosphate: step 7/9. The sequence is that of Histidinol-phosphate aminotransferase from Bifidobacterium longum (strain NCC 2705).